A 442-amino-acid chain; its full sequence is GPI mannosyltransferase 1 (442 aa).

Transmembrane regions (helical) follow at residues Ile-22–Phe-42, Ile-95–Tyr-115, Leu-177–Ile-197, Ala-242–Phe-262, Met-307–Val-327, Leu-336–Ile-356, Ile-361–Ala-381, and Ile-408–Leu-428.

It belongs to the PIGM family.

It is found in the endoplasmic reticulum membrane. It participates in glycolipid biosynthesis; glycosylphosphatidylinositol-anchor biosynthesis. Functionally, mannosyltransferase involved in glycosylphosphatidylinositol-anchor biosynthesis. Transfers the first alpha-1,4-mannose to GlcN-acyl-PI during GPI precursor assembly. This is GPI mannosyltransferase 1 (pigm) from Dictyostelium discoideum (Social amoeba).